The following is a 239-amino-acid chain: mRNA turnover protein 4 homolog (239 aa).

The disordered stretch occupies residues Gln-216–Ser-239. Acidic residues predominate over residues Asp-221–Ser-239. Phosphoserine occurs at positions 225, 229, and 233.

The protein belongs to the universal ribosomal protein uL10 family. In terms of assembly, associates with the pre-60S ribosomal particle. Interacts with MINAS-60 (product of an alternative open reading frame of RBM10).

The protein localises to the nucleus. The protein resides in the nucleolus. It localises to the cytoplasm. Component of the ribosome assembly machinery. Nuclear paralog of the ribosomal protein P0, it binds pre-60S subunits at an early stage of assembly in the nucleolus, and is replaced by P0 in cytoplasmic pre-60S subunits and mature 80S ribosomes. This chain is mRNA turnover protein 4 homolog (MRTO4), found in Bos taurus (Bovine).